The sequence spans 1110 residues: Nonribisomal peptide synthetase benY (1110 aa).

An adenylation region spans residues 47–443; that stretch reads RALEFPEKIA…GRKDHQLKVR (397 aa). The Carrier domain occupies 575-651; sequence TLETESEKIL…EMAQSARVVP (77 aa). S612 bears the O-(pantetheine 4'-phosphoryl)serine mark. The tract at residues 713-1025 is condensation; the sequence is YILDGDVDFD…IFHHQNIDTK (313 aa).

It belongs to the NRP synthetase family.

It participates in secondary metabolite biosynthesis. In terms of biological role, nonribisomal peptide synthetase; part of the gene cluster that mediates the biosynthesis of benzomalvin A and D. The pathway begins with the loading of amino acid precursors onto the A domains of the non ribosomal peptide synthetases benY and benZ. BenY and the A1 domain of benZ are loaded with anthranilate (Anth), while the A2 domain of benZ is loaded with phenylalanine (Phe). N-methylation of Phe by the methyltransferase benX may happen before loading of Phe onto benZ, after loading of Phe, or after dipeptide formation. Condensation of Anth with the secondary amine of NmPhe or Phe is catalyzed by the C1 domain of benZ, forming a dipeptide intermediate. This is followed by in trans condensation of the Anth-NmPhe dipeptide with Anth bound to the T domain of benY by the C2 domain of benZ to form the linear tripeptide Anth-NmPhe-Anth. Cyclization and release of the tripeptide is then catalyzed by the C-terminal C domain of benY and the resulting 11-member macrocyclic intermediate is expected to spontaneously collapse to form the benzodiazepine core. Benzomalvin A is in conformational equilibrium with its atropisomer, benzomalvin D. The sequence is that of Nonribisomal peptide synthetase benY from Aspergillus terreus.